A 223-amino-acid chain; its full sequence is Ubiquinone biosynthesis protein COQ4 homolog 2, mitochondrial (223 aa).

The transit peptide at 1 to 26 (MFLRRVHPVRLGHAIQRSLTTTKSRN) directs the protein to the mitochondrion. Low complexity predominate over residues 21-32 (TTKSRNESTTTT). Positions 21–43 (TTKSRNESTTTTVEAPQAVPSPP) are disordered. 4 residues coordinate Zn(2+): His177, Asp178, His181, and Glu193.

This sequence belongs to the COQ4 family. In terms of assembly, component of a multi-subunit COQ enzyme complex. Requires Zn(2+) as cofactor.

The protein resides in the mitochondrion inner membrane. The enzyme catalyses a 4-hydroxy-3-methoxy-5-(all-trans-polyprenyl)benzoate + H(+) = a 2-methoxy-6-(all-trans-polyprenyl)phenol + CO2. It functions in the pathway cofactor biosynthesis; ubiquinone biosynthesis. In terms of biological role, lyase that catalyzes the C1-decarboxylation of 4-hydroxy-3-methoxy-5-(all-trans-polyprenyl)benzoic acid into 2-methoxy-6-(all-trans-polyprenyl)phenol during ubiquinone biosynthesis. This Culex quinquefasciatus (Southern house mosquito) protein is Ubiquinone biosynthesis protein COQ4 homolog 2, mitochondrial.